The following is a 657-amino-acid chain: UvrABC system protein B (657 aa).

Residues 23 to 414 (KSIKKGNKYQ…KENIFHQIMR (392 aa)) form the Helicase ATP-binding domain. ATP is bound at residue 36–43 (GVTGSGKT). The Beta-hairpin signature appears at 89 to 112 (YYDYYQPEAYIPRTDVFIEKDSST). Positions 431–593 (QVEILFDEAK…ITPTSVKRHI (163 aa)) constitute a Helicase C-terminal domain. One can recognise a UVR domain in the interval 622-657 (AKLAKELRKQMLEAAKALEFEKAAAIRDEINKLRDL).

It belongs to the UvrB family. In terms of assembly, forms a heterotetramer with UvrA during the search for lesions. Interacts with UvrC in an incision complex.

The protein resides in the cytoplasm. Functionally, the UvrABC repair system catalyzes the recognition and processing of DNA lesions. A damage recognition complex composed of 2 UvrA and 2 UvrB subunits scans DNA for abnormalities. Upon binding of the UvrA(2)B(2) complex to a putative damaged site, the DNA wraps around one UvrB monomer. DNA wrap is dependent on ATP binding by UvrB and probably causes local melting of the DNA helix, facilitating insertion of UvrB beta-hairpin between the DNA strands. Then UvrB probes one DNA strand for the presence of a lesion. If a lesion is found the UvrA subunits dissociate and the UvrB-DNA preincision complex is formed. This complex is subsequently bound by UvrC and the second UvrB is released. If no lesion is found, the DNA wraps around the other UvrB subunit that will check the other stand for damage. The chain is UvrABC system protein B from Campylobacter jejuni (strain RM1221).